The following is a 634-amino-acid chain: SPARC-like protein 1 (634 aa).

A signal peptide spans Met1–Ala16. The segment at Ala50–Asp335 is disordered. The segment covering Asp51–Lys62 has biased composition (basic and acidic residues). 3 positions are modified to phosphoserine: Ser68, Ser76, and Ser84. The span at His73–Tyr83 shows a compositional bias: basic and acidic residues. The span at Leu89–Leu99 shows a compositional bias: acidic residues. Over residues Thr131–Asn144 the composition is skewed to polar residues. N-linked (GlcNAc...) asparagine glycosylation is present at Asn144. A phosphoserine mark is found at Ser151 and Ser159. Composition is skewed to acidic residues over residues Glu189–Asp198 and Asn205–Glu214. Residues Gln233–Asp258 show a composition bias toward polar residues. A Phosphoserine modification is found at Ser259. Basic and acidic residues-rich tracts occupy residues Gly263–His276 and Gly292–Val303. A phosphoserine mark is found at Ser333 and Ser340. Residues Glu360–His398 are disordered. Residues Ser366–Glu382 show a composition bias toward basic and acidic residues. Asn368 carries an N-linked (GlcNAc...) asparagine glycan. A phosphoserine mark is found at Ser370 and Ser390. The region spanning Ser402–Cys424 is the Follistatin-like domain. Cystine bridges form between Cys403–Cys414, Cys408–Cys424, Cys426–Cys460, Cys432–Cys453, Cys442–Cys479, Cys485–Cys596, and Cys604–Cys620. The Kazal-like domain occupies Gly420–Ser481. N-linked (GlcNAc...) asparagine glycosylation occurs at Asn446. One can recognise an EF-hand domain in the interval Pro592–Asp627. Residues Asp605, Asn607, Asp609, His611, and Glu616 each coordinate Ca(2+).

Belongs to the SPARC family. In terms of tissue distribution, expressed in many types of neurons in the brain.

The protein resides in the secreted. It is found in the extracellular space. It localises to the extracellular matrix. The protein is SPARC-like protein 1 (Sparcl1) of Rattus norvegicus (Rat).